A 306-amino-acid chain; its full sequence is UDP-N-acetylenolpyruvoylglucosamine reductase (306 aa).

The region spanning 28–193 is the FAD-binding PCMH-type domain; that stretch reads KVGGPADFLA…VSAKFSLKPG (166 aa). Residue Arg-172 is part of the active site. The active-site Proton donor is the Ser-222. Residue Glu-292 is part of the active site.

The protein belongs to the MurB family. FAD serves as cofactor.

Its subcellular location is the cytoplasm. The catalysed reaction is UDP-N-acetyl-alpha-D-muramate + NADP(+) = UDP-N-acetyl-3-O-(1-carboxyvinyl)-alpha-D-glucosamine + NADPH + H(+). It participates in cell wall biogenesis; peptidoglycan biosynthesis. Functionally, cell wall formation. This Streptococcus mutans serotype c (strain ATCC 700610 / UA159) protein is UDP-N-acetylenolpyruvoylglucosamine reductase.